The sequence spans 290 residues: NAD kinase (290 aa).

Catalysis depends on Asp72, which acts as the Proton acceptor. Residues 72 to 73 (DG), Lys77, 145 to 146 (NE), Asp175, 186 to 191 (TAYSLS), and Ala210 each bind NAD(+).

It belongs to the NAD kinase family. A divalent metal cation is required as a cofactor.

Its subcellular location is the cytoplasm. The catalysed reaction is NAD(+) + ATP = ADP + NADP(+) + H(+). Functionally, involved in the regulation of the intracellular balance of NAD and NADP, and is a key enzyme in the biosynthesis of NADP. Catalyzes specifically the phosphorylation on 2'-hydroxyl of the adenosine moiety of NAD to yield NADP. The chain is NAD kinase from Bacteroides fragilis (strain YCH46).